A 420-amino-acid chain; its full sequence is Histidine--tRNA ligase (420 aa).

Belongs to the class-II aminoacyl-tRNA synthetase family. As to quaternary structure, homodimer.

It is found in the cytoplasm. The enzyme catalyses tRNA(His) + L-histidine + ATP = L-histidyl-tRNA(His) + AMP + diphosphate + H(+). In Nitrosomonas europaea (strain ATCC 19718 / CIP 103999 / KCTC 2705 / NBRC 14298), this protein is Histidine--tRNA ligase.